The sequence spans 94 residues: DASH complex subunit dad2 (94 aa).

Residues 18–38 (KLRDSSNDMVQQIETLAAKLE) adopt a coiled-coil conformation. The interval 72–94 (VRIPPSTSNTNASATEQGDVEEV) is disordered. Polar residues predominate over residues 76–87 (PSTSNTNASATE).

It belongs to the DASH complex DAD2 family. As to quaternary structure, component of the DASH complex consisting of ask1, dad1, dad2, dad3, dad4, dam1, duo1, dad5, spc19 and spc34, with a stoichiometry of one copy of each subunit per complex. Multiple DASH complexes oligomerize to form a ring that encircles spindle microtubules and organizes the rod-like NDC80 complexes of the outer kinetochore. DASH complex oligomerization strengthens microtubule attachments. On cytoplasmic microtubules, DASH complexes appear to form patches instead of rings.

It is found in the nucleus. Its subcellular location is the cytoplasm. The protein localises to the cytoskeleton. It localises to the spindle. The protein resides in the chromosome. It is found in the centromere. Its subcellular location is the kinetochore. Its function is as follows. Component of the DASH complex that connects microtubules with kinetochores and couples microtubule depolymerisation to chromosome movement; it is involved in retrieving kinetochores to the spindle poles before their re-orientation on the spindle in early mitosis and allows microtubule depolymerization to pull chromosomes apart and resist detachment during anaphase. Kinetochores, consisting of a centromere-associated inner segment and a microtubule-contacting outer segment, play a crucial role in chromosome segregation by mediating the physical connection between centromeric DNA and microtubules. Kinetochores also serve as an input point for the spindle assembly checkpoint, which delays anaphase until all chromosomes have bioriented on the mitotic spindle. The DASH complex mediates bipolar kinetochore-microtubule attachments and facilitates the formation of additional interactions between outer kinetochore components and spindle microtubules. During chromosome movement along the microtubule, it is required both for the sliding of kinetochores along the lateral side of the microtubule and also for microtubule end-on pulling on the kinetochore. Modulates cytoplasmic microtubule dynamics by tracking the plus-end of shortening microtubules and slowing their depolymerization. The protein is DASH complex subunit dad2 of Schizosaccharomyces pombe (strain 972 / ATCC 24843) (Fission yeast).